The following is a 181-amino-acid chain: ATP synthase subunit delta (181 aa).

The protein belongs to the ATPase delta chain family. In terms of assembly, F-type ATPases have 2 components, F(1) - the catalytic core - and F(0) - the membrane proton channel. F(1) has five subunits: alpha(3), beta(3), gamma(1), delta(1), epsilon(1). F(0) has three main subunits: a(1), b(2) and c(10-14). The alpha and beta chains form an alternating ring which encloses part of the gamma chain. F(1) is attached to F(0) by a central stalk formed by the gamma and epsilon chains, while a peripheral stalk is formed by the delta and b chains.

It is found in the cell inner membrane. Its function is as follows. F(1)F(0) ATP synthase produces ATP from ADP in the presence of a proton or sodium gradient. F-type ATPases consist of two structural domains, F(1) containing the extramembraneous catalytic core and F(0) containing the membrane proton channel, linked together by a central stalk and a peripheral stalk. During catalysis, ATP synthesis in the catalytic domain of F(1) is coupled via a rotary mechanism of the central stalk subunits to proton translocation. In terms of biological role, this protein is part of the stalk that links CF(0) to CF(1). It either transmits conformational changes from CF(0) to CF(1) or is implicated in proton conduction. The chain is ATP synthase subunit delta from Blochmanniella pennsylvanica (strain BPEN).